We begin with the raw amino-acid sequence, 443 residues long: dTDP-4-dehydro-6-deoxy-alpha-D-glucopyranose 2,3-dehydratase (443 aa).

DTDP-4-dehydro-6-deoxy-alpha-D-glucose is bound by residues tryptophan 35, 118-122 (TFSNY), serine 157, tryptophan 260, arginine 325, 341-343 (QCN), 346-347 (NL), and 377-380 (EGGR).

The protein belongs to the hexose 2,3-dehydratase family. As to quaternary structure, homodimer.

It carries out the reaction dTDP-4-dehydro-6-deoxy-alpha-D-glucose = dTDP-3,4-didehydro-2,6-dideoxy-alpha-D-glucose + H2O. It participates in antibiotic biosynthesis; granaticin biosynthesis. Its function is as follows. Involved in the biosynthesis of the 2,6-deoxysugar, dTDP-L-rhodinose, attached to the benzoisochromane quinone chromophore to produce the aglycone antibiotics granaticin and granaticin B. Catalyzes the removal of the hydroxyl group at position C-2 of the hexose ring of dTDP-4-dehydro-6-deoxy-alpha-D-glucopyranose, and the oxidation of the hydroxyl group at position C-3 to form a carbonyl functionality. The product of the reaction, dTDP-2,6-dideoxy-D-glycero-hex-2-enos-4-ulose, is a highly unstable diketosugar, which spontaneously forms dTDP-3,4-didehydro-2,6-dideoxy-alpha-D-glucose. This chain is dTDP-4-dehydro-6-deoxy-alpha-D-glucopyranose 2,3-dehydratase, found in Streptomyces violaceoruber.